A 364-amino-acid polypeptide reads, in one-letter code: Transcription factor IIIA (364 aa).

C2H2-type zinc fingers lie at residues 38–62 (FICS…LCKH), 68–92 (FVCD…VLIH), 98–123 (FVCA…ERKH), 130–154 (YVCS…QCQH), 160–184 (FRCT…GKVH), 187–211 (YLCQ…REAH), 215–237 (ITCN…MKTH), 244–269 (YRCP…LSFH), and 275–299 (FVCE…SVVH). Positions 299 to 364 (HDPDKKRMKL…PPPAALLTVC (66 aa)) are disordered. Over residues 338 to 352 (SLPNASAESSSSPEA) the composition is skewed to low complexity.

The protein resides in the nucleus. In terms of biological role, involved in ribosomal large subunit biogenesis. Binds the approximately 50 base pairs internal control region (ICR) of 5S ribosomal RNA genes. It is required for their RNA polymerase III-dependent transcription and may also maintain the transcription of other genes. Also binds the transcribed 5S RNA's. This Mus musculus (Mouse) protein is Transcription factor IIIA (Gtf3a).